The chain runs to 330 residues: Flotillin-like protein FloA (330 aa).

The next 2 helical transmembrane spans lie at 5 to 25 and 27 to 47; these read FLPL…FYYV and FLLW…QLFL.

It belongs to the flotillin-like FloA family. Homooligomerizes.

It is found in the cell membrane. The protein resides in the membrane raft. Functionally, found in functional membrane microdomains (FMM) that may be equivalent to eukaryotic membrane rafts. FMMs are highly dynamic and increase in number as cells age. Flotillins are thought to be important factors in membrane fluidity. The chain is Flotillin-like protein FloA from Parabacteroides distasonis (strain ATCC 8503 / DSM 20701 / CIP 104284 / JCM 5825 / NCTC 11152).